The sequence spans 201 residues: MALHDENVVWHAHAVTREDREALHGHKGAVVWFTGLSGSGKSTIAGALEEALHKLGISTWLLDGDNVRHGLCSDLGFSDADRKENIRRVGEVANLMVDAGLVVLTAFISPHRAERQMVRERIGEGRFIEVFVDTPLATCEARDPKGLYKKARAGELRNFTGIDSVYETPESPEVHLDGEQLVTNLVAQLLDLLRQGDIIRS.

35 to 42 (GLSGSGKS) contacts ATP. The active-site Phosphoserine intermediate is the S109.

The protein belongs to the APS kinase family.

The enzyme catalyses adenosine 5'-phosphosulfate + ATP = 3'-phosphoadenylyl sulfate + ADP + H(+). It functions in the pathway sulfur metabolism; hydrogen sulfide biosynthesis; sulfite from sulfate: step 2/3. Catalyzes the synthesis of activated sulfate. This is Adenylyl-sulfate kinase from Citrobacter koseri (strain ATCC BAA-895 / CDC 4225-83 / SGSC4696).